The following is a 149-amino-acid chain: Nucleoside diphosphate kinase 1 (149 aa).

Residues K9, F57, R85, T91, R102, and N112 each coordinate ATP. The Pros-phosphohistidine intermediate role is filled by H115.

The protein belongs to the NDK family. Homohexamer. Requires Mg(2+) as cofactor.

The enzyme catalyses a 2'-deoxyribonucleoside 5'-diphosphate + ATP = a 2'-deoxyribonucleoside 5'-triphosphate + ADP. It catalyses the reaction a ribonucleoside 5'-diphosphate + ATP = a ribonucleoside 5'-triphosphate + ADP. Functionally, major role in the synthesis of nucleoside triphosphates other than ATP. The ATP gamma phosphate is transferred to the NDP beta phosphate via a ping-pong mechanism, using a phosphorylated active-site intermediate. This NDK is microtubule-associated. This chain is Nucleoside diphosphate kinase 1 (NDKR), found in Oryza sativa subsp. japonica (Rice).